Here is a 207-residue protein sequence, read N- to C-terminus: Basic helix-loop-helix transcription factor scleraxis (207 aa).

2 disordered regions span residues 1–91 and 151–183; these read MSFA…RDRT and AFFHSGRAGSPLPPPPPPPPLARDGGENTQPKQ. Over residues 73 to 91 the composition is skewed to basic and acidic residues; the sequence is PGREPRQRHTANARERDRT. The region spanning 78–130 is the bHLH domain; that stretch reads RQRHTANARERDRTNSVNTAFTALRTLIPTEPADRKLSKIETLRLASSYISHL. Pro residues predominate over residues 161–171; the sequence is PLPPPPPPPPL.

In terms of assembly, efficient DNA binding requires dimerization with another bHLH protein. Dimerizes and binds the E-box consensus sequence with E12. In terms of tissue distribution, expressed in mesenchymal precursors of cartilage and in connective tissue. Highly expressed in tendons in the limb, tongue and diaphragm and in cartilage of the bronchi.

It localises to the nucleus. In terms of biological role, plays an early essential role in mesoderm formation, as well as a later role in formation of somite-derived chondrogenic lineages. This Mus musculus (Mouse) protein is Basic helix-loop-helix transcription factor scleraxis (Scx).